A 481-amino-acid chain; its full sequence is Beta-1,3-glucan-binding protein (481 aa).

Positions M1–G17 are cleaved as a signal peptide. Residues F19–D123 form the CBM39 domain. In terms of domain architecture, GH16 spans H211–L481. A glycan (N-linked (GlcNAc...) asparagine) is linked at N467.

The protein belongs to the insect beta-1,3-glucan binding protein family. Post-translationally, the N-terminus is blocked. Hemolymph.

Its subcellular location is the secreted. Functionally, involved in the recognition of invading microorganisms. Binds specifically to beta-1,3-glucan and activates the phenoloxidase cascade. This chain is Beta-1,3-glucan-binding protein (GRP), found in Tenebrio molitor (Yellow mealworm beetle).